Consider the following 174-residue polypeptide: Elongation factor Tu, mitochondrial (174 aa).

A GTP-binding site is contributed by 62 to 66; sequence DCPGH. The residue at position 78 (lysine 78) is an N6-succinyllysine. Threonine 103 carries the post-translational modification Phosphothreonine. A Phosphoserine modification is found at serine 121. Residue lysine 161 is modified to N6-acetyllysine.

The protein belongs to the GTP-binding elongation factor family. EF-Tu/EF-1A subfamily.

The protein resides in the mitochondrion. The catalysed reaction is GTP + H2O = GDP + phosphate + H(+). In terms of biological role, GTP hydrolase that promotes the GTP-dependent binding of aminoacyl-tRNA to the A-site of ribosomes during protein biosynthesis. This Mesocricetus auratus (Golden hamster) protein is Elongation factor Tu, mitochondrial.